Reading from the N-terminus, the 1068-residue chain is Self-sufficient cytochrome P450 monooxygenase CYP505U2 (1068 aa).

Heme is bound at residue Cys-408. The tract at residues 464-498 is disordered; the sequence is TTAGMVPESVQSLRQAQKSGKPGNSKSSANESMVG. Residues 472–498 are compositionally biased toward polar residues; it reads SVQSLRQAQKSGKPGNSKSSANESMVG. Residues 505–646 form the Flavodoxin-like domain; it reads VSIFYGSNSG…DLEKWEESIL (142 aa). FMN is bound by residues 511-515 and 590-622; these read SNSGS and VFGCGHHDWATTFYKIPILIDELLEQRGAQRVA. The 231-residue stretch at 679-909 folds into the FAD-binding FR-type domain; it reads KEFLEATVTS…RRSNPAFHPP (231 aa).

The protein in the N-terminal section; belongs to the cytochrome P450 family. It depends on FAD as a cofactor. Requires FMN as cofactor. The cofactor is heme.

The catalysed reaction is 2 oxidized [cytochrome P450] + NADPH = 2 reduced [cytochrome P450] + NADP(+) + H(+). The enzyme catalyses an organic molecule + reduced [NADPH--hemoprotein reductase] + O2 = an alcohol + oxidized [NADPH--hemoprotein reductase] + H2O + H(+). It carries out the reaction dodecanoate + reduced [NADPH--hemoprotein reductase] + O2 = 3-hydroxydodecanoate + oxidized [NADPH--hemoprotein reductase] + H2O + H(+). It catalyses the reaction dodecanoate + reduced [NADPH--hemoprotein reductase] + O2 = 7-hydroxydodecanoate + oxidized [NADPH--hemoprotein reductase] + H2O + H(+). The catalysed reaction is dodecan-1-ol + reduced [NADPH--hemoprotein reductase] + O2 = 1,4-dodecanediol + oxidized [NADPH--hemoprotein reductase] + H2O + H(+). The enzyme catalyses dodecan-1-ol + reduced [NADPH--hemoprotein reductase] + O2 = 1,3-dodecanediol + oxidized [NADPH--hemoprotein reductase] + H2O + H(+). Its function is as follows. Self-sufficient cytochrome P450 monooxygenase that catalyzes the regioselective in-chain hydroxylation of alkanes, fatty alcohols, and fatty acids. Preferentially hydroxylates 1-dodecanol at C3 and C4 (positions omega-8 and omega-9). It is very likely that CYP505U2 prefers dodecanol, and probably other fatty alcohols, over fatty acids as substrates. Does not show any significant activity toward tetradecanoic acid. This Exserohilum turcicum (strain 28A) (Northern leaf blight fungus) protein is Self-sufficient cytochrome P450 monooxygenase CYP505U2.